A 121-amino-acid chain; its full sequence is Flagellar hook-basal body complex protein FliE (121 aa).

The protein belongs to the FliE family.

The protein localises to the bacterial flagellum basal body. This Saccharophagus degradans (strain 2-40 / ATCC 43961 / DSM 17024) protein is Flagellar hook-basal body complex protein FliE.